The primary structure comprises 96 residues: Pterin-4-alpha-carbinolamine dehydratase (96 aa).

The protein belongs to the pterin-4-alpha-carbinolamine dehydratase family.

The protein resides in the spore wall. It carries out the reaction (4aS,6R)-4a-hydroxy-L-erythro-5,6,7,8-tetrahydrobiopterin = (6R)-L-erythro-6,7-dihydrobiopterin + H2O. Functionally, has a role in spore wall formation. The sequence is that of Pterin-4-alpha-carbinolamine dehydratase (omt2) from Schizosaccharomyces pombe (strain 972 / ATCC 24843) (Fission yeast).